The primary structure comprises 415 residues: Phosphoglycerate kinase (415 aa).

13 residues coordinate (2R)-3-phosphoglycerate: Val22, Asp23, Phe24, Asn25, Gln37, Arg38, Ser61, His62, Gly64, Arg65, Arg121, His168, and Arg169. ADP is bound at residue Gly212. Gly212 provides a ligand contact to CDP. Positions 213 and 214 each coordinate AMP. Ala213 provides a ligand contact to ATP. Ala213 contacts Mg(2+). Mg(2+) contacts are provided by Ala216 and Asp217. Asp217 is a binding site for CDP. Residue Lys218 coordinates AMP. Residue Lys218 participates in ATP binding. An ADP-binding site is contributed by Gly236. Residue Gly236 coordinates CDP. 2 residues coordinate AMP: Gly237 and Gly311. The ATP site is built by Gly237 and Gly311. The CDP site is built by Gly336 and Phe341. Phe341 is a binding site for ADP. Position 342 (Glu342) interacts with AMP. Positions 342, 373, and 374 each coordinate ATP. Asp373 contacts Mg(2+).

It belongs to the phosphoglycerate kinase family. As to quaternary structure, monomer. It depends on Mg(2+) as a cofactor.

Its subcellular location is the cytoplasm. The catalysed reaction is (2R)-3-phosphoglycerate + ATP = (2R)-3-phospho-glyceroyl phosphate + ADP. Its pathway is carbohydrate degradation; glycolysis; pyruvate from D-glyceraldehyde 3-phosphate: step 2/5. In terms of biological role, enzyme of the glycolytic pathway. Glycolysis is essential in glial cells but not in neurons; neurons rely on the citric acid cycle for their energy needs, and on lactate and alanine secreted into the hemolymph by glial cells to fuel it. The polypeptide is Phosphoglycerate kinase (Drosophila melanogaster (Fruit fly)).